The chain runs to 424 residues: CinA-like protein (424 aa).

The protein belongs to the CinA family.

The sequence is that of CinA-like protein from Shewanella loihica (strain ATCC BAA-1088 / PV-4).